We begin with the raw amino-acid sequence, 249 residues long: tRNA (guanine-N(1)-)-methyltransferase (249 aa).

S-adenosyl-L-methionine-binding positions include G113 and 133 to 138; that span reads IGDYVL.

This sequence belongs to the RNA methyltransferase TrmD family. Homodimer.

The protein localises to the cytoplasm. The enzyme catalyses guanosine(37) in tRNA + S-adenosyl-L-methionine = N(1)-methylguanosine(37) in tRNA + S-adenosyl-L-homocysteine + H(+). In terms of biological role, specifically methylates guanosine-37 in various tRNAs. The protein is tRNA (guanine-N(1)-)-methyltransferase of Aeromonas salmonicida (strain A449).